Consider the following 299-residue polypeptide: Ribosomal RNA small subunit methyltransferase H (299 aa).

S-adenosyl-L-methionine contacts are provided by residues G36–H38, D55, D103, and Q110. 2 stretches are compositionally biased toward basic and acidic residues: residues K268 to R282 and R289 to D299. Residues K268–D299 form a disordered region.

It belongs to the methyltransferase superfamily. RsmH family.

Its subcellular location is the cytoplasm. It carries out the reaction cytidine(1402) in 16S rRNA + S-adenosyl-L-methionine = N(4)-methylcytidine(1402) in 16S rRNA + S-adenosyl-L-homocysteine + H(+). In terms of biological role, specifically methylates the N4 position of cytidine in position 1402 (C1402) of 16S rRNA. The protein is Ribosomal RNA small subunit methyltransferase H of Thermotoga sp. (strain RQ2).